Here is a 253-residue protein sequence, read N- to C-terminus: Probable transcriptional regulatory protein Tpet_0454 (253 aa).

The protein belongs to the TACO1 family.

The protein localises to the cytoplasm. This is Probable transcriptional regulatory protein Tpet_0454 from Thermotoga petrophila (strain ATCC BAA-488 / DSM 13995 / JCM 10881 / RKU-1).